Consider the following 2212-residue polypeptide: Voltage-dependent P/Q-type calcium channel subunit alpha-1A (2212 aa).

Over 1–100 the chain is Cytoplasmic; sequence MARFGDEMPG…KYAKKITEWP (100 aa). An I repeat occupies 87-365; sequence NVVRKYAKKI…LVLGVLSGEF (279 aa). A helical membrane pass occupies residues 101 to 119; the sequence is PFEYMILATIIANCIVLAL. At 120-138 the chain is on the extracellular side; it reads EQHLPDDDKTPMSERLDDT. Residues 139–156 form a helical membrane-spanning segment; the sequence is EPYFIGIFCFEAGIKIVA. Topologically, residues 157 to 168 are cytoplasmic; that stretch reads LGFAFHKGSYLR. A helical transmembrane segment spans residues 169–184; it reads NGWNVMDFVVVLTGIL. Over 185–192 the chain is Extracellular; it reads ATVGTEFD. Residues 193–211 traverse the membrane as a helical segment; the sequence is LRTLRAVRVLRPLKLVSGI. The Cytoplasmic portion of the chain corresponds to 212–230; sequence PSLQVVLKSIMKAMIPLLQ. The helical transmembrane segment at 231–250 threads the bilayer; sequence IGLLLFFAILIFAIIGLEFY. Residues 251–337 lie on the Extracellular side of the membrane; that stretch reads MGKFHTTCFE…NSNDASGNTW (87 aa). N285 carries N-linked (GlcNAc...) asparagine glycosylation. E320 contacts Ca(2+). The chain crosses the membrane as a helical span at residues 338-362; that stretch reads NWLYFIPLIIIGSFFMLNLVLGVLS. The Cytoplasmic portion of the chain corresponds to 363–489; that stretch reads GEFAKERERV…FYIRRMVKTQ (127 aa). The tract at residues 385-402 is binding to the beta subunit; the sequence is QQIERELNGYMEWISKAE. Residue T411 is modified to Phosphothreonine. 2 positions are modified to phosphoserine: S450 and S453. Residues 475–719 form an II repeat; the sequence is ERRMRFYIRR…VFLAIAVDNL (245 aa). Residues 490 to 509 traverse the membrane as a helical segment; that stretch reads AFYWTVLSLVALNTLWLAIV. Over 510 to 523 the chain is Extracellular; it reads HYNQPEWLSDFLYY. The chain crosses the membrane as a helical span at residues 524–543; the sequence is AEFIFLGLFMSEMFIKMYGL. Topologically, residues 544–551 are cytoplasmic; it reads GTRPYFHS. Residues 552–570 traverse the membrane as a helical segment; that stretch reads SFNCFDCGVIIGSIFEVIW. The Extracellular segment spans residues 571–580; it reads AVIKPGTSFG. Residues 581–599 traverse the membrane as a helical segment; sequence ISVLRALRLLRIFKVTKYW. Residues 600 to 618 are Cytoplasmic-facing; it reads ASLRNLVVSLLNSMKSIIS. Residues 619–638 traverse the membrane as a helical segment; the sequence is LLFLLFLFIVVFALLGMQLF. Residues 639–691 lie on the Extracellular side of the membrane; sequence GGQFNFDEGTPPTNFDTFPAAIMTVFQILTGEDWNEVMYDEIKSQGGVQGGMV. Residue E670 participates in Ca(2+) binding. A helical transmembrane segment spans residues 692-716; the sequence is FSIYFIVLTLFGNYTLLNVFLAIAV. At 717–1190 the chain is on the cytoplasmic side; that stretch reads DNLANAQELT…TNPLRRLCHY (474 aa). A phosphoserine mark is found at S752, S755, and S792. Composition is skewed to basic and acidic residues over residues 814–824, 850–862, 871–924, and 932–958; these read PDVKTHLDRPL, RPRESARDPDARR, APGR…EGEP, and RPGDEPDDRPERRPRPRDATRPARAAD. 2 disordered regions span residues 814-1117 and 1137-1170; these read PDVK…RKPE and VNKNANPDPLPKKEEEKKEEEEADPGEDGPKPMP. Phosphoserine occurs at positions 1038, 1042, and 1051. Positions 1056–1073 are enriched in polar residues; sequence GNSTNPGPALATNPQNAA. Residues 1074–1083 are compositionally biased toward low complexity; sequence SRRTPNNPGN. A compositionally biased stretch (polar residues) spans 1094 to 1111; it reads ENSLIVTNPSSTQPNSAK. Residues 1153–1163 are compositionally biased toward acidic residues; that stretch reads KKEEEEADPGE. Residues 1182–1465 form an III repeat; the sequence is NPLRRLCHYI…IFVALIIITF (284 aa). Residues 1191–1214 form a helical membrane-spanning segment; it reads ILNLRYFEMCILMVIAMSSIALAA. Residues 1215–1231 are Extracellular-facing; sequence EDPVQPNAPRNNVLRYF. The chain crosses the membrane as a helical span at residues 1232 to 1251; that stretch reads DYVFTGVFTFEMVIKMIDLG. Residues 1252-1258 lie on the Cytoplasmic side of the membrane; the sequence is LVLHQGA. A helical membrane pass occupies residues 1259–1282; the sequence is YFRDLWNILDFIVVSGALVAFAFT. Residues 1283–1293 are Extracellular-facing; sequence GNSKGKDINTI. Residues 1294-1311 traverse the membrane as a helical segment; sequence KSLRVLRVLRPLKTIKRL. The Cytoplasmic segment spans residues 1312–1330; the sequence is PKLKAVFDCVVNSLKNVFN. Residues 1331–1350 form a helical membrane-spanning segment; the sequence is ILIVYMLFMFIFAVVAVQLF. The Extracellular portion of the chain corresponds to 1351–1437; sequence KGKFFHCTDE…QGPSPGYRME (87 aa). Residue E1411 coordinates Ca(2+). Residues 1438–1462 form a helical membrane-spanning segment; sequence MSIFYVVYFVVFPFFFVNIFVALII. Residues 1463-1518 are Cytoplasmic-facing; it reads ITFQEQGDKMMEEYSLEKNERACIDFAISAKPLTRHMPQNKQSFQYRMWQFVVSPP. The stretch at 1502–1765 is one IV repeat; the sequence is NKQSFQYRMW…LFVAVIMDNF (264 aa). A helical transmembrane segment spans residues 1519-1537; sequence FEYTIMAMIALNTIVLMMK. Residues 1538–1551 are Extracellular-facing; that stretch reads FYGASVAYENALRV. A helical membrane pass occupies residues 1552 to 1573; sequence FNIVFTSLFSLECVLKVMAFGI. At 1574-1580 the chain is on the cytoplasmic side; it reads LNYFRDA. The helical transmembrane segment at 1581–1600 threads the bilayer; that stretch reads WNIFDFVTVLGSITDILVTE. Residues 1601 to 1607 are Extracellular-facing; the sequence is FGNNFIN. A glycan (N-linked (GlcNAc...) asparagine) is linked at N1607. The helical transmembrane segment at 1608–1626 threads the bilayer; it reads LSFLRLFRAARLIKLLRQG. At 1627 to 1645 the chain is on the cytoplasmic side; the sequence is YTIRILLWTFVQSFKALPY. Residues 1646–1665 form a helical membrane-spanning segment; that stretch reads VCLLIAMLFFIYAIIGMQVF. Residues 1666–1737 lie on the Extracellular side of the membrane; the sequence is GNIGIDGEDE…IQKPECGNEF (72 aa). The helical transmembrane segment at 1738–1763 threads the bilayer; the sequence is AYFYFVSFIFLCSFLMLNLFVAVIMD. Topologically, residues 1764-2212 are cytoplasmic; it reads NFEYLTRDSS…EGREHATHRQ (449 aa). T1935 is subject to Phosphothreonine. The tract at residues 1940 to 2212 is disordered; that stretch reads QRMEPPSPTQ…EGREHATHRQ (273 aa). 2 stretches are compositionally biased toward polar residues: residues 1948-1963 and 1972-1997; these read TQEGGPSQNALPSTQL and QESSMKESPSWVTQRAQEMFQKTGTW. Residues S1998, S2016, S2028, S2030, S2071, and S2091 each carry the phosphoserine modification. Residues 2008 to 2017 show a composition bias toward polar residues; sequence PNSQPNSQSV. Basic and acidic residues predominate over residues 2018–2034; it reads EMREMGTDGYSDSEHYL. A compositionally biased stretch (polar residues) spans 2064 to 2073; the sequence is LSTISDTSPM. 2 stretches are compositionally biased toward basic and acidic residues: residues 2085–2102 and 2143–2153; these read RRLDDYSLERVPPEENQR and PSKDRDQDRGR. The span at 2154–2172 shows a compositional bias: basic residues; that stretch reads PKDRKHRPHHHHHHHHHHP. A compositionally biased stretch (basic and acidic residues) spans 2173-2212; that stretch reads PAPDRERYAQERPDTGRARAREQRWSRSPSEGREHATHRQ.

Belongs to the calcium channel alpha-1 subunit (TC 1.A.1.11) family. CACNA1A subfamily. As to quaternary structure, voltage-dependent calcium channels are multisubunit complexes, consisting of alpha-1, alpha-2, beta and delta subunits in a 1:1:1:1 ratio. The channel activity is directed by the pore-forming and voltage-sensitive alpha-1 subunit. In many cases, this subunit is sufficient to generate voltage-sensitive calcium channel activity. The auxiliary subunits beta and alpha-2/delta linked by a disulfide bridge regulate the channel activity. Interacts (via C-terminal CDB motif) with CABP1 in the pre- and postsynaptic membranes. Interacts with the spider omega-agatoxin-IVA (AC P30288). Interacts with TSPOAP1. As to expression, brain specific. Purkinje cells contain predominantly P-type VSCC, the Q-type being a prominent calcium current in cerebellar granule cells. Also found in heart, in kidney distal convoluted tubule (DCT), and in pituitary.

Its subcellular location is the cell membrane. The enzyme catalyses Ca(2+)(in) = Ca(2+)(out). Functionally, voltage-sensitive calcium channels (VSCC) mediate the entry of calcium ions into excitable cells and are also involved in a variety of calcium-dependent processes, including muscle contraction, hormone or neurotransmitter release, gene expression, cell motility, cell division and cell death. The isoform alpha-1A gives rise to P and/or Q-type calcium currents. P/Q-type calcium channels belong to the 'high-voltage activated' (HVA) group and are specifically blocked by the spider omega-agatoxin-IVA (AC P30288). They are however insensitive to dihydropyridines (DHP). The chain is Voltage-dependent P/Q-type calcium channel subunit alpha-1A from Rattus norvegicus (Rat).